Consider the following 815-residue polypeptide: cGMP-specific 3',5'-cyclic phosphodiesterase delta (815 aa).

Over Met-1–Tyr-56 the chain is Cytoplasmic. The helical transmembrane segment at Ile-57–Phe-77 threads the bilayer. Topologically, residues Asn-78–Tyr-86 are extracellular. Residues Val-87–Ile-107 form a helical membrane-spanning segment. Over Lys-108–Lys-120 the chain is Cytoplasmic. A helical membrane pass occupies residues Gly-121–Phe-141. Topologically, residues Thr-142 to Asn-160 are extracellular. Residues Ser-161–Leu-181 form a helical membrane-spanning segment. Residues Ser-182 to Phe-183 lie on the Cytoplasmic side of the membrane. The helical transmembrane segment at Phe-184–Ile-204 threads the bilayer. The Extracellular portion of the chain corresponds to Lys-205–Asn-210. The N-linked (GlcNAc...) asparagine glycan is linked to Asn-207. A helical membrane pass occupies residues Tyr-211 to Leu-231. At Arg-232–Leu-815 the chain is on the cytoplasmic side. Residues Tyr-384–Ile-762 form the PDEase domain. His-459 functions as the Proton donor in the catalytic mechanism. His-459–His-463 serves as a coordination point for 3',5'-cyclic GMP. The a divalent metal cation site is built by His-463, His-499, Asp-500, and Asp-616. 3 residues coordinate 3',5'-cyclic GMP: Asp-500, Asp-616, and Gln-715.

This sequence belongs to the cyclic nucleotide phosphodiesterase family. A divalent metal cation is required as a cofactor.

Its subcellular location is the membrane. It catalyses the reaction 3',5'-cyclic GMP + H2O = GMP + H(+). The protein operates within purine metabolism; 3',5'-cyclic GMP degradation; GMP from 3',5'-cyclic GMP: step 1/1. Its function is as follows. Specifically hydrolyzes the second messenger cGMP, which is a key regulator of many important physiological processes. Probably by regulating cGMP levels, required for activation of gametogenesis. This chain is cGMP-specific 3',5'-cyclic phosphodiesterase delta, found in Plasmodium falciparum (isolate 3D7).